The chain runs to 279 residues: Undecaprenyl-diphosphatase (279 aa).

8 helical membrane passes run 1–21 (MVLEAVLLGIVQGITEFLPIS), 39–59 (GRFFLSSVQLGTSFALILYFF), 96–116 (LLLVTGTIPVVLLGFLLVRFV), 128–148 (FTMGVALIVFGLLLGFADALF), 155–175 (IFQITFIESVLIGAAQIFAII), 201–221 (FSFLLSLPVTFIGGMYGLVAG), 231–251 (YSLIGAIVSFVVGLLVVSALL), and 259–279 (FVLFVYYRVLFGLFLVIVSFF).

Belongs to the UppP family.

Its subcellular location is the cell membrane. It carries out the reaction di-trans,octa-cis-undecaprenyl diphosphate + H2O = di-trans,octa-cis-undecaprenyl phosphate + phosphate + H(+). Functionally, catalyzes the dephosphorylation of undecaprenyl diphosphate (UPP). Confers resistance to bacitracin. The protein is Undecaprenyl-diphosphatase of Tropheryma whipplei (strain TW08/27) (Whipple's bacillus).